Reading from the N-terminus, the 416-residue chain is MSLVAIGINHKTATVDLREKVAFSPDKIHDAMKSLASRTRSGEAVIVSTCNRTELYCNNGDEADIIEWLEEYHGLDHQDVAPCLYNYHGQAAVKHLMRVASGLDSLILGEPQILGQVKQAFVKAKEAGTVALTIDRLFQNTFSVAKKVRTETEIGAAAVSVAFAAVSMAKHIFSSLSTTKVLLIGAGETIELVAKHLKDNGVASMVVANRTLERAQSMCEEFNATAITLAQIPDFLPKADIVISSTASPLPILGKGMVEKALKQRRHQPMLLVDIAVPRDIEPEVADLDDAFLYTVDDLHSIIEQNKASRKEAAEQAELITEEQSYLFMDWVRSLESVDSIREYRSQSMAIKDELVERALNKLAQGGDTEQVLIELANRLTNRLIHAPTQALTVASRQGDLNTLGQLRTALGLDKN.

Residues 49–52 (TCNR), Ser-105, 110–112 (EPQ), and Gln-116 each bind substrate. The Nucleophile role is filled by Cys-50. 185–190 (GAGETI) is an NADP(+) binding site.

This sequence belongs to the glutamyl-tRNA reductase family. In terms of assembly, homodimer.

The catalysed reaction is (S)-4-amino-5-oxopentanoate + tRNA(Glu) + NADP(+) = L-glutamyl-tRNA(Glu) + NADPH + H(+). It participates in porphyrin-containing compound metabolism; protoporphyrin-IX biosynthesis; 5-aminolevulinate from L-glutamyl-tRNA(Glu): step 1/2. Catalyzes the NADPH-dependent reduction of glutamyl-tRNA(Glu) to glutamate 1-semialdehyde (GSA). The chain is Glutamyl-tRNA reductase from Shewanella sp. (strain MR-7).